A 1038-amino-acid chain; its full sequence is MKSDFLTSTTHFNPSIFLPKIPSRNSRISIKSSSSSSKVRPDPWSLSDGNPEKPKPRYERPKHPLSDDDARRIIKKKAQYLSTLRRNQGSQAMTPKWIKRTPEQMVQYLEDDRNGQMYGKHVVAAIKTVRGLSQRRQGSDDMRFVMSSFVAKLSFRDMCVVLKEQRGWRQVRDFFSWMKLQLSYRPSVVVYTIVLRLYGQVGKIKMAEETFLEMLEVGCEPDAVACGTMLCTYARWGRHSAMLTFYKAVQERRILLSTSVYNFMLSSLQKKSFHGKVIDLWLEMVEEGVPPNEFTYTLVVSSYAKQGFKEEALKAFGEMKSLGFVPEEVTYSSVISLSVKAGDWEKAIGLYEDMRSQGIVPSNYTCATMLSLYYKTENYPKALSLFADMERNKIPADEVIRGLIIRIYGKLGLFHDAQSMFEETERLNLLADEKTYLAMSQVHLNSGNVVKALDVIEMMKTRDIPLSRFAYIVMLQCYAKIQNVDCAEEAFRALSKTGLPDASSCNDMLNLYTRLNLGEKAKGFIKQIMVDQVHFDIELYKTAMRVYCKEGMVAEAQDLIVKMGREARVKDNRFVQTLAESMHIVNKHDKHEAVLNVSQLDVMALGLMLNLRLKEGNLNETKAILNLMFKTDLGSSAVNRVISSFVREGDVSKAEMIADIIIRLGLRMEEETIATLIAVYGRQHKLKEAKRLYLAAGESKTPGKSVIRSMIDAYVRCGWLEDAYGLFMESAEKGCDPGAVTISILVNALTNRGKHREAEHISRTCLEKNIELDTVGYNTLIKAMLEAGKLQCASEIYERMHTSGVPCSIQTYNTMISVYGRGLQLDKAIEIFSNARRSGLYLDEKIYTNMIMHYGKGGKMSEALSLFSEMQKKGIKPGTPSYNMMVKICATSRLHHEVDELLQAMERNGRCTDLSTYLTLIQVYAESSQFAEAEKTITLVKEKGIPLSHSHFSSLLSALVKAGMMEEAERTYCKMSEAGISPDSACKRTILKGYMTCGDAEKGILFYEKMIRSSVEDDRFVSSVVEDLYKAVGKEQDV.

The span at 23 to 38 (SRNSRISIKSSSSSSK) shows a compositional bias: low complexity. Residues 23-69 (SRNSRISIKSSSSSSKVRPDPWSLSDGNPEKPKPRYERPKHPLSDDD) are disordered. The segment covering 50-69 (NPEKPKPRYERPKHPLSDDD) has biased composition (basic and acidic residues). PPR repeat units follow at residues 187–221 (SVVV…GCEP), 222–256 (DAVA…RILL), 257–291 (STSV…GVPP), 292–326 (NEFT…GFVP), 327–361 (EEVT…GIVP), 362–396 (SNYT…KIPA), 397–431 (DEVI…NLLA), 432–466 (DEKT…DIPL), 467–501 (SRFA…GLPD), 502–535 (ASSC…QVHF), 536–570 (DIEL…ARVK), 601–631 (DVMA…MFKT), 634–668 (GSSA…GLRM), 669–699 (EEET…AGES), 703–737 (GKSV…GCDP), 738–772 (GAVT…NIEL), 773–807 (DTVG…GVPC), 808–842 (SIQT…GLYL), 843–877 (DEKI…GIKP), 878–912 (GTPS…GRCT), 913–947 (DLST…GIPL), 948–982 (SHSH…GISP), and 983–1017 (DSAC…SVED).

It belongs to the PPR family. P subfamily.

This Arabidopsis thaliana (Mouse-ear cress) protein is Pentatricopeptide repeat-containing protein At5g27270 (EMB976).